A 211-amino-acid chain; its full sequence is Arginine exporter protein ArgO (211 aa).

Transmembrane regions (helical) follow at residues 1–21 (MFTY…PLGP), 37–57 (LMIA…GIFG), 68–88 (LLAL…FGAL), 111–131 (IIIT…DTFV), 147–167 (WFAL…ALLA), and 179–199 (AQRI…FQLA).

The protein belongs to the LysE/ArgO transporter (TC 2.A.75) family.

The protein resides in the cell inner membrane. It catalyses the reaction L-arginine(in) = L-arginine(out). In terms of biological role, involved in the export of arginine. Important to control the intracellular level of arginine and the correct balance between arginine and lysine. The protein is Arginine exporter protein ArgO of Klebsiella pneumoniae subsp. pneumoniae (strain ATCC 700721 / MGH 78578).